The sequence spans 154 residues: Lipoprotein signal peptidase (154 aa).

The next 3 helical transmembrane spans lie at 4-24 (IIIP…KLWI), 62-82 (LFTL…MKHI), and 84-104 (GSYW…GNFI). Active-site residues include D114 and D130. Residues 125 to 145 (IFNVADSYLTIGIICLMIALW) traverse the membrane as a helical segment.

The protein belongs to the peptidase A8 family.

The protein resides in the cell membrane. The enzyme catalyses Release of signal peptides from bacterial membrane prolipoproteins. Hydrolyzes -Xaa-Yaa-Zaa-|-(S,diacylglyceryl)Cys-, in which Xaa is hydrophobic (preferably Leu), and Yaa (Ala or Ser) and Zaa (Gly or Ala) have small, neutral side chains.. The protein operates within protein modification; lipoprotein biosynthesis (signal peptide cleavage). Its function is as follows. This protein specifically catalyzes the removal of signal peptides from prolipoproteins. The chain is Lipoprotein signal peptidase from Streptococcus agalactiae serotype V (strain ATCC BAA-611 / 2603 V/R).